A 72-amino-acid chain; its full sequence is Translation initiation factor IF-1 (72 aa).

The 72-residue stretch at 1–72 (MAKEEVLEFP…TKGRITYRFK (72 aa)) folds into the S1-like domain.

This sequence belongs to the IF-1 family. Component of the 30S ribosomal translation pre-initiation complex which assembles on the 30S ribosome in the order IF-2 and IF-3, IF-1 and N-formylmethionyl-tRNA(fMet); mRNA recruitment can occur at any time during PIC assembly.

Its subcellular location is the cytoplasm. Functionally, one of the essential components for the initiation of protein synthesis. Stabilizes the binding of IF-2 and IF-3 on the 30S subunit to which N-formylmethionyl-tRNA(fMet) subsequently binds. Helps modulate mRNA selection, yielding the 30S pre-initiation complex (PIC). Upon addition of the 50S ribosomal subunit IF-1, IF-2 and IF-3 are released leaving the mature 70S translation initiation complex. The protein is Translation initiation factor IF-1 of Brucella abortus (strain 2308).